A 419-amino-acid chain; its full sequence is G protein-activated inward rectifier potassium channel 4 (419 aa).

At 1–86 the chain is on the cytoplasmic side; the sequence is MAGDSRNAMN…LFTTLVDLKW (86 aa). Position 5 is a phosphoserine (Ser-5). Residues 87–111 form a helical membrane-spanning segment; that stretch reads RFNLLVFTMVYTITWLFFGFIWWLI. Over 112–135 the chain is Extracellular; the sequence is AYVRGDLDHVGDQEWIPCVENLSG. The helical; Pore-forming intramembrane region spans 136–147; it reads FVSAFLFSIETE. The segment at residues 148–154 is an intramembrane region (pore-forming); sequence TTIGYGF. The Selectivity filter motif lies at 149-154; that stretch reads TIGYGF. Residues 155–163 lie on the Extracellular side of the membrane; sequence RVITEKCPE. The chain crosses the membrane as a helical span at residues 164–185; sequence GIILLLVQAILGSIVNAFMVGC. The Cytoplasmic segment spans residues 186-419; it reads MFVKISQPKK…SVSRATRGSM (234 aa). Over residues 380–390 the composition is skewed to low complexity; it reads LPSPPLLGGCA. Positions 380–419 are disordered; that stretch reads LPSPPLLGGCAEAEKEAEAEHDEEEEPNGLSVSRATRGSM. The segment covering 409–419 has biased composition (polar residues); sequence LSVSRATRGSM.

The protein belongs to the inward rectifier-type potassium channel (TC 1.A.2.1) family. KCNJ5 subfamily. As to quaternary structure, associates with KCNJ3/GIRK1 or KCNJ6/GRIK2 to form a G-protein-activated heteromultimer pore-forming unit. The resulting inward current is much larger. Most abundant in heart tissue where it is found predominantly in atria. Also found in brain, kidney, liver, spleen, lung and thymus.

Its subcellular location is the membrane. The enzyme catalyses K(+)(in) = K(+)(out). Heteromultimer composed of KCNJ3/GIRK1 and KCNJ5/GIRK4 is activated by phosphatidylinositol 4,5 biphosphate (PtdIns(4,5)P2). Its function is as follows. Inward rectifier potassium channels are characterized by a greater tendency to allow potassium to flow into the cell rather than out of it. Their voltage dependence is regulated by the concentration of extracellular potassium; as external potassium is raised, the voltage range of the channel opening shifts to more positive voltages. The inward rectification is mainly due to the blockage of outward current by internal magnesium. Can be blocked by external barium. This potassium channel is controlled by G proteins. The chain is G protein-activated inward rectifier potassium channel 4 (Kcnj5) from Rattus norvegicus (Rat).